Consider the following 480-residue polypeptide: UDP-glucose 6-dehydrogenase 2 (480 aa).

Residues 8–13 (GAGYVG), Asp33, Arg38, 86–90 (VNTPT), 127–128 (ST), and Glu161 contribute to the NAD(+) site. Residues 157-161 (EFLAE), 216-223 (KLAANAFL), and 256-269 (RIGPKFLNSSVGFG) each bind substrate. The active-site Nucleophile is the Cys272. Position 272-275 (272-275 (CFQK)) interacts with NAD(+). Residue 334-335 (FK) participates in substrate binding. Arg342 lines the NAD(+) pocket. Arg447 contributes to the substrate binding site.

The protein belongs to the UDP-glucose/GDP-mannose dehydrogenase family. As to expression, preferentially expressed in roots.

The enzyme catalyses UDP-alpha-D-glucose + 2 NAD(+) + H2O = UDP-alpha-D-glucuronate + 2 NADH + 3 H(+). It functions in the pathway nucleotide-sugar biosynthesis; UDP-alpha-D-glucuronate biosynthesis; UDP-alpha-D-glucuronate from UDP-alpha-D-glucose: step 1/1. Its activity is regulated as follows. Inhibited by UDP-xylose. In terms of biological role, involved in the biosynthesis of UDP-glucuronic acid (UDP-GlcA), providing nucleotide sugars for cell-wall polymers. Required for the formation of cell wall ingrowths on the outer cell walls of nematode-induced syncytia. This is UDP-glucose 6-dehydrogenase 2 (UGD2) from Arabidopsis thaliana (Mouse-ear cress).